The following is a 124-amino-acid chain: Tax1-binding protein 3 (124 aa).

Residue S2 is modified to N-acetylserine. One can recognise a PDZ domain in the interval 15-112; the sequence is RVEIHKLRQG…EVVRLLVTRQ (98 aa). S61 carries the post-translational modification Phosphoserine.

Interacts (via its PDZ domain) with GLS2. Interacts (via its PDZ domain) with RTKN (via the C-terminal region); this interaction facilitates Rho-mediated activation of the FOS serum response element (SRE). Interacts (via its PDZ domain) with CTNNB1; this interaction inhibits the transcriptional activity of CTNNB1. Interacts with HTLV-1 TAX protein. Interacts (via PDZ domain) with ARHGEF16. Interacts (via PDZ domain) with KCNJ4 (via C-terminus). Competes with LIN7A for KCNJ4 binding. Interacts with ADGRB2. As to expression, ubiquitous. Detected in brain, heart, kidney, lung, small intestine and skeletal muscle. Detected in various cell lines including HeLa. Weakly expressed in peripheral blood leukocytes.

The protein localises to the cytoplasm. Its subcellular location is the nucleus. It is found in the cell membrane. In terms of biological role, may regulate a number of protein-protein interactions by competing for PDZ domain binding sites. Binds CTNNB1 and may thereby act as an inhibitor of the Wnt signaling pathway. Competes with LIN7A for KCNJ4 binding, and thereby promotes KCNJ4 internalization. May play a role in the Rho signaling pathway. May play a role in activation of CDC42 by the viral protein HPV16 E6. The protein is Tax1-binding protein 3 of Homo sapiens (Human).